The primary structure comprises 194 residues: ATP-dependent Clp protease proteolytic subunit (194 aa).

Serine 98 acts as the Nucleophile in catalysis. The active site involves histidine 123.

It belongs to the peptidase S14 family. In terms of assembly, fourteen ClpP subunits assemble into 2 heptameric rings which stack back to back to give a disk-like structure with a central cavity, resembling the structure of eukaryotic proteasomes.

The protein localises to the cytoplasm. The enzyme catalyses Hydrolysis of proteins to small peptides in the presence of ATP and magnesium. alpha-casein is the usual test substrate. In the absence of ATP, only oligopeptides shorter than five residues are hydrolyzed (such as succinyl-Leu-Tyr-|-NHMec, and Leu-Tyr-Leu-|-Tyr-Trp, in which cleavage of the -Tyr-|-Leu- and -Tyr-|-Trp bonds also occurs).. Functionally, cleaves peptides in various proteins in a process that requires ATP hydrolysis. Has a chymotrypsin-like activity. Plays a major role in the degradation of misfolded proteins. The sequence is that of ATP-dependent Clp protease proteolytic subunit from Syntrophus aciditrophicus (strain SB).